Consider the following 322-residue polypeptide: Quinolinate synthase (322 aa).

His-37 and Ser-54 together coordinate iminosuccinate. Cys-99 provides a ligand contact to [4Fe-4S] cluster. Residues 125–127 (YVN) and Ser-142 contribute to the iminosuccinate site. Cys-185 serves as a coordination point for [4Fe-4S] cluster. Iminosuccinate contacts are provided by residues 211–213 (HPE) and Thr-228. Cys-278 contributes to the [4Fe-4S] cluster binding site.

The protein belongs to the quinolinate synthase family. Type 2 subfamily. Requires [4Fe-4S] cluster as cofactor.

The protein resides in the cytoplasm. The catalysed reaction is iminosuccinate + dihydroxyacetone phosphate = quinolinate + phosphate + 2 H2O + H(+). It functions in the pathway cofactor biosynthesis; NAD(+) biosynthesis; quinolinate from iminoaspartate: step 1/1. In terms of biological role, catalyzes the condensation of iminoaspartate with dihydroxyacetone phosphate to form quinolinate. In Chlorobaculum tepidum (strain ATCC 49652 / DSM 12025 / NBRC 103806 / TLS) (Chlorobium tepidum), this protein is Quinolinate synthase.